Here is a 414-residue protein sequence, read N- to C-terminus: Esterase FrsA (414 aa).

This sequence belongs to the FrsA family.

The enzyme catalyses a carboxylic ester + H2O = an alcohol + a carboxylate + H(+). Functionally, catalyzes the hydrolysis of esters. The protein is Esterase FrsA of Shigella boydii serotype 4 (strain Sb227).